The sequence spans 311 residues: Olfactory receptor 8H1 (311 aa).

The Extracellular segment spans residues methionine 1–methionine 25. N-linked (GlcNAc...) asparagine glycosylation is present at asparagine 5. Residues alanine 26–isoleucine 46 form a helical membrane-spanning segment. Residues leucine 47–glutamine 54 are Cytoplasmic-facing. The chain crosses the membrane as a helical span at residues leucine 55–threonine 75. The Extracellular portion of the chain corresponds to valine 76–alanine 98. Cysteine 96 and cysteine 188 are oxidised to a cystine. The chain crosses the membrane as a helical span at residues glutamine 99 to tyrosine 119. Residues aspartate 120–arginine 138 lie on the Cytoplasmic side of the membrane. The chain crosses the membrane as a helical span at residues leucine 139–valine 159. Residues valine 160–isoleucine 196 are Extracellular-facing. The chain crosses the membrane as a helical span at residues methionine 197–serine 216. Over tyrosine 217 to alanine 236 the chain is Cytoplasmic. A helical transmembrane segment spans residues leucine 237–threonine 257. The Extracellular portion of the chain corresponds to tyrosine 258 to aspartate 270. The helical transmembrane segment at glutamine 271 to leucine 291 threads the bilayer. The Cytoplasmic portion of the chain corresponds to arginine 292 to arginine 311.

This sequence belongs to the G-protein coupled receptor 1 family.

It localises to the cell membrane. In terms of biological role, odorant receptor. In Homo sapiens (Human), this protein is Olfactory receptor 8H1 (OR8H1).